The sequence spans 267 residues: MASSEETPRSLTGKVALVTGAGRGIGKGIALELAKRGASVVVNYNSAEKPAQEVVDEIAKTGSRAVAIKADITKVPEVSRLFQEALRHFGHLDIVVSNSGTEVFKPEEEVTEEDYDRVFNLNTRAQFFIAQHAYVHLRNGGRIVLMSSVAANMSGIPNHALYAGSKAAVEGFTRSFAVDAGHKKITVNAIAPGGVKTDMYDANAWHYVPNGKPGMPMEEIDKGLAAFCPLGRVAVPQDIGRVVAFLAHPDSEWVNGQVILLTGGSVT.

NADP(+) is bound by residues Ile25, Asn45, Asp71, and Asn98. Residues Ser147 and Ser148 each act as proton donor in the active site. Residues Tyr162, Lys166, Val195, and Thr197 each contribute to the NADP(+) site. Catalysis depends on Tyr162, which acts as the Proton acceptor. The active-site Lowers pKa of active site Tyr is Lys166.

It belongs to the short-chain dehydrogenases/reductases (SDR) family.

Functionally, hydroxynaphthalene reductase-like protein; part of the Pks2 gene cluster that mediates the formation of infectious structures (appressoria), enabling these fungi to kill insects faster. The product of the Pks2 gene cluster is different from the one of Pks1 and has still not been identified. This chain is Hydroxynaphthalene reductase-like protein Arp2, found in Metarhizium robertsii (strain ARSEF 23 / ATCC MYA-3075) (Metarhizium anisopliae (strain ARSEF 23)).